Reading from the N-terminus, the 586-residue chain is CTP synthase (586 aa).

Residues 1–265 (MVRFIFVTGG…ENKVLNFFNI (265 aa)) form an amidoligase domain region. CTP is bound at residue serine 13. Serine 13 contributes to the UTP binding site. ATP-binding positions include 14 to 19 (SLGKGI) and aspartate 71. 2 residues coordinate Mg(2+): aspartate 71 and glutamate 139. Residues 146–148 (DIE), 186–191 (KTKPTQ), and lysine 222 contribute to the CTP site. UTP is bound by residues 186-191 (KTKPTQ) and lysine 222. Residues 290–582 (KIAIITKYHK…IKATIEYNKS (293 aa)) enclose the Glutamine amidotransferase type-1 domain. Glycine 352 is an L-glutamine binding site. Residue cysteine 379 is the Nucleophile; for glutamine hydrolysis of the active site. L-glutamine is bound by residues 380-383 (FGMQ) and glutamate 403. Residues 429-473 (AHISKCTYSEAFECDASTVYTNIHEDSNNLSTDKLQIETNFRNMS) form the RPE1 insert domain. Arginine 510 contributes to the L-glutamine binding site. Catalysis depends on residues histidine 555 and glutamate 557.

It belongs to the CTP synthase family. As to quaternary structure, homotetramer.

It catalyses the reaction UTP + L-glutamine + ATP + H2O = CTP + L-glutamate + ADP + phosphate + 2 H(+). The enzyme catalyses L-glutamine + H2O = L-glutamate + NH4(+). The catalysed reaction is UTP + NH4(+) + ATP = CTP + ADP + phosphate + 2 H(+). Its pathway is pyrimidine metabolism; CTP biosynthesis via de novo pathway; CTP from UDP: step 2/2. Its activity is regulated as follows. Allosterically activated by GTP, when glutamine is the substrate; GTP has no effect on the reaction when ammonia is the substrate. The allosteric effector GTP functions by stabilizing the protein conformation that binds the tetrahedral intermediate(s) formed during glutamine hydrolysis. Inhibited by the product CTP, via allosteric rather than competitive inhibition. Catalyzes the ATP-dependent amination of UTP to CTP with either L-glutamine or ammonia as the source of nitrogen. Regulates intracellular CTP levels through interactions with the four ribonucleotide triphosphates. This Rickettsia prowazekii (strain Madrid E) protein is CTP synthase.